The primary structure comprises 222 residues: Probable nicotinate-nucleotide adenylyltransferase (222 aa).

The protein belongs to the NadD family.

The catalysed reaction is nicotinate beta-D-ribonucleotide + ATP + H(+) = deamido-NAD(+) + diphosphate. Its pathway is cofactor biosynthesis; NAD(+) biosynthesis; deamido-NAD(+) from nicotinate D-ribonucleotide: step 1/1. In terms of biological role, catalyzes the reversible adenylation of nicotinate mononucleotide (NaMN) to nicotinic acid adenine dinucleotide (NaAD). The polypeptide is Probable nicotinate-nucleotide adenylyltransferase (Xylella fastidiosa (strain M23)).